Reading from the N-terminus, the 739-residue chain is Nucleoprotein (739 aa).

Positions 334-363 (VNVGEQYQQLREAATEAEKQLQQYAESREL) form a coiled coil. 2 disordered regions span residues 414–475 (RPNL…YHDD) and 498–642 (FELQ…IGQS). The span at 570-579 (TPIDQGDDDP) shows a compositional bias: acidic residues. The segment covering 614 to 624 (AEAHEPPHKSS) has biased composition (basic and acidic residues). A compositionally biased stretch (polar residues) spans 625 to 634 (NEPAETSQLN).

The protein belongs to the filoviruses nucleoprotein family. Homooligomer. Homomultimerizes to form the nucleocapsid. Binds to viral genomic RNA. Interacts with VP35 and VP30 to form the nucleocapsid. Interacts with host PPP2R5C; this interaction leads to VP30 dephosphorylation and viral transcription. Interacts with VP24; this interaction facilitates nucleocapsid assembly and genome packaging. Interacts with matrix protein VP40; this interaction allows recruitment of the nucleocapsid into progeny virions. Interacts with host STAU1. Interacts with host NXF1 (via RNA-binding domain); this interaction recruits NXF1 to the inclusion bodies were viral replication takes place, probably to export viral mRNA-NXF1 complexes from these sites. Interacts with host CCDC92; this interaction sequesters NP in the host cytoplasm. Interacts with host TRIM14. In terms of processing, phosphorylated and O-glycosylated by host. Acetylated by host EP300 in vitro.

Its subcellular location is the virion. It localises to the host cytoplasm. Oligomerizes into helical capsid to encapsidate the viral genome, protecting it from nucleases and the cellular innate immune response. VP35 binds to and stabilizes monomeric NP, keeping it soluble. Upon virus replication, NP is recruited to bind cooperatively viral genomic RNA and VP35 is released. The encapsidated genomic RNA is termed the nucleocapsid and serves as template for transcription and replication. The nucleocapsid is helical with a pitch of 10.81 NP per turn and a diameter of about 22nm. Each NP binds to six nucleotides of viral genomic RNA, three being exposed to the solvant and three hidden into the nucleocapsid. Also recruits host PPP2R5C phosphatase to dephosphorylate VP30 and thereby promote viral transcription. Upon virion assembly and budding, NP binds to VP24 and possibly host STAU1. In Homo sapiens (Human), this protein is Nucleoprotein (NP).